The following is a 511-amino-acid chain: Sphingosine-1-phosphate transporter MFSD2B (511 aa).

The next 9 helical transmembrane spans lie at 108–128, 136–156, 236–256, 280–300, 323–343, 357–377, 379–399, 415–435, and 462–482; these read MPWM…LWFV, VLWY…YHVP, IAAG…FLGV, TMQF…SAAV, NLVL…QWFL, LMIP…AYVV, VASG…LPDV, AIFY…ALGI, and LLIG…LAFY.

It belongs to the major facilitator superfamily.

The protein resides in the cell membrane. It carries out the reaction sphing-4-enine 1-phosphate(in) = sphing-4-enine 1-phosphate(out). It catalyses the reaction sphinganine 1-phosphate(in) = sphinganine 1-phosphate(out). The enzyme catalyses sphinga-4E,14Z-dienine-1-phosphate(in) = sphinga-4E,14Z-dienine-1-phosphate(out). Functionally, lipid transporter that specifically mediates export of sphingosine-1-phosphate in red blood cells and platelets. Sphingosine-1-phosphate is a signaling sphingolipid and its export from red blood cells into in the plasma is required for red blood cell morphology. Sphingosine-1-phosphate export from platelets is required for platelet aggregation and thrombus formation. In addition to export, also able to mediate S1P import. This Xenopus tropicalis (Western clawed frog) protein is Sphingosine-1-phosphate transporter MFSD2B.